The following is a 191-amino-acid chain: Cytochrome c biogenesis ATP-binding export protein CcmA (191 aa).

Positions 2-190 constitute an ABC transporter domain; the sequence is LSLHQLQFKN…SIKSAQILRI (189 aa). 29–36 lines the ATP pocket; that stretch reads GANGCGKS.

Belongs to the ABC transporter superfamily. CcmA exporter (TC 3.A.1.107) family. In terms of assembly, the complex is composed of two ATP-binding proteins (CcmA) and two transmembrane proteins (CcmB).

The protein localises to the cell inner membrane. It carries out the reaction heme b(in) + ATP + H2O = heme b(out) + ADP + phosphate + H(+). Part of the ABC transporter complex CcmAB involved in the biogenesis of c-type cytochromes; once thought to export heme, this seems not to be the case, but its exact role is uncertain. Responsible for energy coupling to the transport system. The polypeptide is Cytochrome c biogenesis ATP-binding export protein CcmA (Rickettsia conorii (strain ATCC VR-613 / Malish 7)).